We begin with the raw amino-acid sequence, 189 residues long: GMP synthase [glutamine-hydrolyzing] subunit A (189 aa).

The Glutamine amidotransferase type-1 domain maps to 5–189; sequence KIIVINNYGQ…MNFFKVCEDY (185 aa). C79 functions as the Nucleophile in the catalytic mechanism. Active-site residues include H166 and E168.

As to quaternary structure, heterodimer composed of a glutamine amidotransferase subunit (A) and a GMP-binding subunit (B).

The enzyme catalyses XMP + L-glutamine + ATP + H2O = GMP + L-glutamate + AMP + diphosphate + 2 H(+). It participates in purine metabolism; GMP biosynthesis; GMP from XMP (L-Gln route): step 1/1. Functionally, catalyzes the synthesis of GMP from XMP. The polypeptide is GMP synthase [glutamine-hydrolyzing] subunit A (Methanococcoides burtonii (strain DSM 6242 / NBRC 107633 / OCM 468 / ACE-M)).